A 1984-amino-acid polypeptide reads, in one-letter code: Sodium channel protein type 9 subunit alpha (1984 aa).

The Cytoplasmic segment spans residues 1 to 125; sequence MAMLPPPGPQ…RRISIKILVH (125 aa). The segment covering 26–39 has biased composition (basic and acidic residues); the sequence is RISEEKAKGHKDEK. A disordered region spans residues 26–55; the sequence is RISEEKAKGHKDEKKDDEEEGPKPSSDLEA. Residues 112–410 form an I repeat; that stretch reads FSPLRRISIK…VAMAYEEQNQ (299 aa). The chain crosses the membrane as a helical span at residues 126–145; that stretch reads SLFSMLIMCTILTNCIFMTM. Over 146 to 150 the chain is Extracellular; it reads SNPPD. The chain crosses the membrane as a helical span at residues 151 to 172; sequence WTKNVEYTFTGIYTFESLIKIL. Over 173-185 the chain is Cytoplasmic; sequence ARGFCVGEFTFLR. The helical transmembrane segment at 186–204 threads the bilayer; it reads DPWNWLDFVVIVFAYLTEF. Over 205-210 the chain is Extracellular; sequence VNLGNV. A helical membrane pass occupies residues 211–227; the sequence is SALRTFRVLRALKTISV. Residues 228 to 241 are Cytoplasmic-facing; that stretch reads IPGLKTIVGALIQS. Residues 242–267 traverse the membrane as a helical segment; sequence VKKLSDVMILTVFCLSVFALIGLQLF. At 268-346 the chain is on the extracellular side; it reads MGNLKHKCFR…PDYGYTSFDT (79 aa). The cysteines at positions 275 and 324 are disulfide-linked. Positions 347 to 363 form an intramembrane region, pore-forming; that stretch reads FGWAFLALFRLMTQDYW. Residues 364 to 376 lie on the Extracellular side of the membrane; that stretch reads ENLYQQTLRAAGK. A helical membrane pass occupies residues 377-402; that stretch reads TYMIFFVVVIFLGSFYLINLILAVVA. Positions 402 to 449 form a coiled coil; the sequence is AMAYEEQNQANIEEAKQKELEFQQMLDRLKKEQEEAEAIAAAAAEYTS. Topologically, residues 403 to 744 are cytoplasmic; it reads MAYEEQNQAN…FIYFIVMDPF (342 aa). The span at 458–471 shows a compositional bias: low complexity; it reads LSESSSETSRLSSK. 2 disordered regions span residues 458-540 and 574-609; these read LSES…SIRG and HSIFGDNESRRGSLFVPHRPRERRSSNISQASRSPP. Over residues 474–486 the composition is skewed to basic residues; the sequence is KERRNRRKKKKQK. Composition is skewed to basic and acidic residues over residues 489–509 and 574–584; these read SGEEKGDDEKLSKSGSEESIR and HSIFGDNESRR. A coiled-coil region spans residues 684-708; the sequence is LRQRAMSRASILTNTVEELEESRQK. The stretch at 725–988 is one II repeat; sequence CSPYWIKFKK…EEDTDANNLQ (264 aa). Residues 745–761 traverse the membrane as a helical segment; it reads VDLAITICIVLNTLFMA. Residues 762 to 770 lie on the Extracellular side of the membrane; that stretch reads MEHHPMTDE. A helical transmembrane segment spans residues 771 to 795; it reads FKNVLAVGNLVFTGIFAAEMVLKLI. Over 796–804 the chain is Cytoplasmic; it reads AMDPYEYFQ. Residues 805–821 form a helical membrane-spanning segment; sequence VGWNIFDSLIVTLSLVE. The Extracellular segment spans residues 822-830; that stretch reads LFLADVEGL. A helical membrane pass occupies residues 831 to 847; the sequence is SVLRSFRLLRVFKLAKS. Over 848-864 the chain is Cytoplasmic; the sequence is WPTLNMLIKIIGNSVGA. Residues 865–887 traverse the membrane as a helical segment; it reads LGNLTLVLAIIVFIFAVVGMQLF. Residues 888 to 914 lie on the Extracellular side of the membrane; the sequence is GKSYKECVCKINENCKLPRWHMNDFFH. Cys-896 and Cys-902 are disulfide-bonded. The pore-forming intramembrane region spans 915 to 927; sequence SFLIVFRVLCGEW. At 928 to 939 the chain is on the extracellular side; sequence IETMWDCMEVAG. Cys-934 and Cys-943 are disulfide-bonded. A helical membrane pass occupies residues 940–966; sequence QTMCLIVYMMVMVIGNLVVLNLFLALL. Over 967–1185 the chain is Cytoplasmic; that stretch reads LSSFSSDNLT…WWTIRKTCYR (219 aa). Disordered stretches follow at residues 1015-1039 and 1089-1145; these read KKPKGSKDTKRTADPNNKRENYISN and PIAP…EPIN. Over residues 1019-1035 the composition is skewed to basic and acidic residues; the sequence is GSKDTKRTADPNNKREN. The segment covering 1135 to 1145 has biased composition (acidic residues); the sequence is GEEEAEAEPIN. Residues 1178-1486 form an III repeat; that stretch reads TIRKTCYRIV…KKYYNAMKKL (309 aa). The chain crosses the membrane as a helical span at residues 1186 to 1210; the sequence is IVEHSWFESFIVLMILLSSGALAFE. The Extracellular portion of the chain corresponds to 1211–1222; it reads DIYIEKKKTIKI. Residues 1223–1248 traverse the membrane as a helical segment; that stretch reads ILEYADKIFTYIFILEMLLKWVAYGY. Residues 1249–1250 are Cytoplasmic-facing; sequence KT. Residues 1251–1276 form a helical membrane-spanning segment; sequence YFTNAWCWLDFLIVDVSLVTLVANTL. The Extracellular segment spans residues 1277-1285; that stretch reads GYSDLGPIK. Residues 1286–1302 form a helical membrane-spanning segment; the sequence is SLRTLRALRPLRALSRF. Residues 1303–1315 are Cytoplasmic-facing; it reads EGMRVVVNALIGA. The chain crosses the membrane as a helical span at residues 1316 to 1340; the sequence is IPSIMNVLLVCLIFWLIFSIMGVNL. At 1341–1392 the chain is on the extracellular side; sequence FAGKFYECVNTTDGSRFSVSQVANRSECFALMNVSGNVRWKNLKVNFDNVGL. Cys-1348 and Cys-1368 form a disulfide bridge. Residues 1393–1403 constitute an intramembrane region (pore-forming); the sequence is GYLSLLQVATF. At 1404 to 1429 the chain is on the extracellular side; it reads KGWMDIMYAAVDSVNVNAQPIYEYNL. A helical membrane pass occupies residues 1430–1455; the sequence is YMYIYFVIFIIFGSFFTLNLFIGVII. Topologically, residues 1456–1512 are cytoplasmic; that stretch reads DNFNQQKKKLGGQDIFMTEEQKKYYNAMKKLGSKKPQKPIPRPGNKFQGCIFDLVTN. The residue at position 1488 (Ser-1488) is a Phosphoserine; by PKC. The stretch at 1495–1793 is one IV repeat; sequence IPRPGNKFQG…WEKFDPDATQ (299 aa). Residues 1513–1532 form a helical membrane-spanning segment; it reads QAFDITIMVLICLNMVTMMV. The Extracellular segment spans residues 1533 to 1543; sequence EKEGQTDYMSF. The helical transmembrane segment at 1544-1565 threads the bilayer; it reads VLYWINVVFIILFTGECVLKLI. At 1566–1574 the chain is on the cytoplasmic side; the sequence is SLRHYYFTV. A helical transmembrane segment spans residues 1575 to 1596; sequence GWNIFDFVVVILSIVGMFLAEM. At 1597 to 1605 the chain is on the extracellular side; the sequence is IEKYFVSPT. The chain crosses the membrane as a helical span at residues 1606–1625; that stretch reads LFRVIRLARIGRILRLIKGA. Topologically, residues 1626–1638 are cytoplasmic; the sequence is KGIRTLLFALMMS. Residues 1639–1661 form a helical membrane-spanning segment; that stretch reads LPALFNIGLLLFLVMFIYAIFGM. The Extracellular portion of the chain corresponds to 1662–1684; the sequence is SNFAYVKKEAGINDMFNFETFGN. The segment at residues 1685 to 1697 is an intramembrane region (pore-forming); it reads SMICLFQITTSAG. Residues 1698–1731 lie on the Extracellular side of the membrane; that stretch reads WDGLLAPILNSAPPDCDPKKVHPGSSVEGDCGNP. Residues Cys-1713 and Cys-1728 are joined by a disulfide bond. The helical transmembrane segment at 1732–1757 threads the bilayer; it reads SVGIFYFVSYIIISFLVVVNMYIAVI. Topologically, residues 1758-1984 are cytoplasmic; it reads LENFSVATEE…EDKEKDESRK (227 aa). Residues 1887–1916 form the IQ domain; sequence EDVSATIIQRAYRRYRLRQNVKNISSIYIK. Residues 1933–1984 are disordered; it reads DNVNENSSPEKTDATASTISPPSYDSVTKPDQEKYETDKTEKEDKEKDESRK. Residues 1946 to 1958 are compositionally biased toward polar residues; sequence ATASTISPPSYDS. Basic and acidic residues predominate over residues 1960–1984; it reads TKPDQEKYETDKTEKEDKEKDESRK.

This sequence belongs to the sodium channel (TC 1.A.1.10) family. Nav1.7/SCN9A subfamily. As to quaternary structure, the Nav1.7 voltage-gated sodium channel consists of an ion-conducting alpha subunit SCN9A which is functional on its own regulated by one or more beta-1 (SCN1B), beta-2 (SCN2B), beta-3 (SCN3B) and beta-4 (SCN4B) subunits. SCN1B and SCN3B are non-covalently associated with SCN9A. SCN2B and SCN4B are disulfide-linked to SCN9A. SCN1B regulates channel inactivation. Interacts with NEDD4 and NEDD4L; regulates Nav1.7 activity most probably through ubiquitination and subsequent endocytosis. Interacts with TMEM233; modulates the gating properties of NaV1.7. In terms of processing, ubiquitinated by NEDD4L; which may promote its endocytosis. Post-translationally, phosphorylation at Ser-1488 by PKC in a highly conserved cytoplasmic loop increases peak sodium currents. Expressed strongly in sciatic nerves, with moderate levels in kidney. Not detected in liver, brain and muscle.

The protein localises to the cell membrane. It is found in the cell projection. Its subcellular location is the neuron projection. It localises to the axon. The catalysed reaction is Na(+)(in) = Na(+)(out). Pore-forming subunit of Nav1.7, a voltage-gated sodium (Nav) channel that directly mediates the depolarizing phase of action potentials in excitable membranes. Navs, also called VGSCs (voltage-gated sodium channels) or VDSCs (voltage-dependent sodium channels), operate by switching between closed and open conformations depending on the voltage difference across the membrane. In the open conformation they allow Na(+) ions to selectively pass through the pore, along their electrochemical gradient. The influx of Na(+) ions provokes membrane depolarization, initiating the propagation of electrical signals throughout cells and tissues. Nav1.7 plays a crucial role in controlling the excitability and action potential propagation from nociceptor neurons, thereby contributing to the sensory perception of pain. This Mus musculus (Mouse) protein is Sodium channel protein type 9 subunit alpha.